Consider the following 297-residue polypeptide: MAFQECVIEVAQDQAEAWSDALFDLGALSVSVEDADADTPDEQPLFGEPGLEPKQLAWNRSRVVALFGDDADPAVVVAAAANQLGIDPVPPYQLRAVEDQDWVRLTQSQFEPIRVGERIWVVPSWHDAPEPDAVVLELDPGLAFGTGSHPTTRLCMQWLEQNLTPGETVLDYGCGSGILAIVARKLGAGDTVGIDIDPNAVEASRYNAERNHVEASFALPESVSDASYDLVVANILSNPLKLMAAMLSARVRAGGRLVLSGVLERQAEEVAAAYAPWLPLTVWRSEEGWVCLHGTRP.

The S-adenosyl-L-methionine site is built by threonine 152, glycine 173, aspartate 195, and asparagine 234.

Belongs to the methyltransferase superfamily. PrmA family.

Its subcellular location is the cytoplasm. It carries out the reaction L-lysyl-[protein] + 3 S-adenosyl-L-methionine = N(6),N(6),N(6)-trimethyl-L-lysyl-[protein] + 3 S-adenosyl-L-homocysteine + 3 H(+). Its function is as follows. Methylates ribosomal protein L11. The protein is Ribosomal protein L11 methyltransferase of Cupriavidus taiwanensis (strain DSM 17343 / BCRC 17206 / CCUG 44338 / CIP 107171 / LMG 19424 / R1) (Ralstonia taiwanensis (strain LMG 19424)).